A 216-amino-acid polypeptide reads, in one-letter code: 3-keto-L-gulonate-6-phosphate decarboxylase UlaD (216 aa).

Residue Asp-11 participates in substrate binding. 2 residues coordinate Mg(2+): Glu-33 and Asp-62. Arg-192 contacts substrate.

It belongs to the HPS/KGPDC family. KGPDC subfamily. As to quaternary structure, homodimer. The cofactor is Mg(2+).

The catalysed reaction is 3-dehydro-L-gulonate 6-phosphate + H(+) = L-xylulose 5-phosphate + CO2. It functions in the pathway cofactor degradation; L-ascorbate degradation; D-xylulose 5-phosphate from L-ascorbate: step 2/4. Catalyzes the decarboxylation of 3-keto-L-gulonate-6-P into L-xylulose-5-P. Is involved in the anaerobic L-ascorbate utilization. This Escherichia fergusonii (strain ATCC 35469 / DSM 13698 / CCUG 18766 / IAM 14443 / JCM 21226 / LMG 7866 / NBRC 102419 / NCTC 12128 / CDC 0568-73) protein is 3-keto-L-gulonate-6-phosphate decarboxylase UlaD.